The chain runs to 748 residues: MAGFKRGYDGKIAGLYDLDKTLGRGHFAVVKLARHVFTGEKVAVKVIDKTKLDTLATGHLFQEVRCMKLVQHPNIVRLYEVIDTQTKLYLILELGDGGDMFDYIMKHEEGLNEDLAKKYFAQIVHAISYCHKLHVVHRDLKPENVVFFEKQGLVKLTDFGFSNKFQPGKKLTTSCGSLAYSAPEILLGDEYDAPAVDIWSLGVILFMLVCGQPPFQEANDSETLTMIMDCKYTVPPRVSAGCRDLITRMLQRDPKRRASLEEIESHPWLQGVDPSPATKYNIPLVSYKNLSEEEHNSIIQRMVLGDIADRDAIVEALETNRYNHITATYFLLAERILREKQEKEIQTRSASPSNIKAQFRQSWPTKIDVPQDLEDDLTATPLSHATVPQSPARAGDNVLNGHRSKGLCDPAKKDELPELAGPALSTVPPASMKPAASGRKCLFRVEEDEEEDEEDKKPVSLSTQVVLRRKPSVTNRLTSRKSAPVLNQIFEEGESDDEFDMDENLPPKLSRLKMNIASPGTVHKRYHRRKSQGRGSSCSSSETSDDDSESRRRLDKDSGFAYSWHRRDSSEGPPGSEGDGGGQSKPSSGGGVDKASPGEQGTGGGSQGGSGGTPSGTAGSSRRCAGPDSSSPSPASASAAPRGAELVQSLKLVSLCLGSQLHGAKYILDPQKALFSSVKVQEKSTWKMCISAPGPSPSADLDPVRTKKLRNNALQLPLCEKTISVNIQRSRKEGLLCASSPASCCHVI.

Residues 16–269 form the Protein kinase domain; the sequence is YDLDKTLGRG…LEEIESHPWL (254 aa). ATP contacts are provided by residues 22-30 and K45; that span reads LGRGHFAVV. Residue D139 is the Proton acceptor of the active site. At S162 the chain carries Phosphoserine. Phosphothreonine; by LKB1 is present on T173. The region spanning 291 to 334 is the UBA domain; sequence SEEEHNSIIQRMVLGDIADRDAIVEALETNRYNHITATYFLLAE. Residues S362, S390, S482, S495, and S518 each carry the phosphoserine modification. The segment at 383–415 is disordered; it reads SHATVPQSPARAGDNVLNGHRSKGLCDPAKKDE. Positions 491 to 503 are enriched in acidic residues; the sequence is EEGESDDEFDMDE. The disordered stretch occupies residues 491-640; that stretch reads EEGESDDEFD…SPSPASASAA (150 aa). Residues 522–532 show a composition bias toward basic residues; that stretch reads VHKRYHRRKSQ. Over residues 533-542 the composition is skewed to low complexity; sequence GRGSSCSSSE. Omega-N-methylarginine is present on R534. The span at 549–558 shows a compositional bias: basic and acidic residues; the sequence is ESRRRLDKDS. Gly residues-rich tracts occupy residues 575 to 592 and 600 to 614; these read GSEG…GGGV and QGTG…GGTP. S606 carries the post-translational modification Phosphoserine. Positions 629-640 are enriched in low complexity; that stretch reads SSSPSPASASAA.

The protein belongs to the protein kinase superfamily. CAMK Ser/Thr protein kinase family. Mg(2+) is required as a cofactor. Autophosphorylated. Phosphorylation on Thr-173 by STK11/LKB1 in complex with STE20-related adapter-alpha (STRADA) pseudo kinase and CAB39. Ubiquitously expressed in all tissues examined.

It is found in the nucleus. It catalyses the reaction L-seryl-[protein] + ATP = O-phospho-L-seryl-[protein] + ADP + H(+). The catalysed reaction is L-threonyl-[protein] + ATP = O-phospho-L-threonyl-[protein] + ADP + H(+). Activated by phosphorylation on Thr-173. Its function is as follows. May play a role in hematopoietic cell proliferation or differentiation. Potential mediator of neuronal apoptosis. This is SNF-related serine/threonine-protein kinase from Mus musculus (Mouse).